We begin with the raw amino-acid sequence, 351 residues long: Palmitoyltransferase spe-10 (351 aa).

Helical transmembrane passes span 21–43 (TGWI…LWWS), 60–80 (IQAT…MWSL), 198–218 (YFLL…LTSL), and 241–261 (LFSF…LIIF). In terms of domain architecture, DHHC spans 154-204 (KYCYECGHIKPDRARHCSSCGKCCIKYDHHCPWINMCVTHVNYKYFLLYII).

The protein belongs to the DHHC palmitoyltransferase family. In terms of tissue distribution, expressed during spermatogenesis in budding and budded spermatids.

Its subcellular location is the membrane. The enzyme catalyses L-cysteinyl-[protein] + hexadecanoyl-CoA = S-hexadecanoyl-L-cysteinyl-[protein] + CoA. Involved in spermatogenesis, specifically in the morphogenesis of fibrous body-membranous organelles (FB-MO), which are Golgi-derived organelles used for transporting sperm-specific components, in spermatocytes and in their localization into budding spermatids. Required for the proper formation of spermatids and spermatozoa. The chain is Palmitoyltransferase spe-10 from Caenorhabditis elegans.